Here is a 393-residue protein sequence, read N- to C-terminus: Histidinol dehydrogenase (393 aa).

Residues Tyr-112, Gln-171, and Asn-194 each coordinate NAD(+). Positions 217, 239, and 242 each coordinate substrate. 2 residues coordinate Zn(2+): Gln-239 and His-242. Residues Glu-293 and His-294 each act as proton acceptor in the active site. Substrate-binding residues include His-294, Asp-326, Glu-379, and His-384. Asp-326 is a binding site for Zn(2+). A Zn(2+)-binding site is contributed by His-384.

It belongs to the histidinol dehydrogenase family. Requires Zn(2+) as cofactor.

The catalysed reaction is L-histidinol + 2 NAD(+) + H2O = L-histidine + 2 NADH + 3 H(+). It participates in amino-acid biosynthesis; L-histidine biosynthesis; L-histidine from 5-phospho-alpha-D-ribose 1-diphosphate: step 9/9. Catalyzes the sequential NAD-dependent oxidations of L-histidinol to L-histidinaldehyde and then to L-histidine. The sequence is that of Histidinol dehydrogenase from Sulfolobus acidocaldarius (strain ATCC 33909 / DSM 639 / JCM 8929 / NBRC 15157 / NCIMB 11770).